The sequence spans 416 residues: Trehalose synthase (416 aa).

The protein belongs to the glycosyltransferase group 1 family. Glycosyltransferase 4 subfamily. Homodimer. Mg(2+) serves as cofactor.

The enzyme catalyses an NDP-alpha-D-glucose + D-glucose = alpha,alpha-trehalose + a ribonucleoside 5'-diphosphate + H(+). With respect to regulation, inhibited by 20 mM Fe(3+) and Mn(2+). Partially inhibited by Zn(2+) and Ni(2+). Activity is slightly enhanced by 2 mM Fe (3+), Mn (2+), Ca(2+) or Li(+) and by 20 mM Mg(2+), Ca(2+) or Li(+). Synthesizes trehalose from ADP-glucose and glucose. The reaction is reversible, the equilibrium strongly favors trehalose synthesis. This chain is Trehalose synthase, found in Rubrobacter xylanophilus (strain DSM 9941 / JCM 11954 / NBRC 16129 / PRD-1).